The chain runs to 1687 residues: Zinc finger protein 142 (1687 aa).

2 disordered regions span residues 1-23 and 83-150; these read MTDPLLDSQPASSTGEMDGLCPE and TLTP…RLEG. The segment covering 125 to 140 has biased composition (basic and acidic residues); the sequence is KEEKSDTQKDSQKAVD. S154 bears the Phosphoserine mark. C2H2-type zinc fingers lie at residues 163–185, 219–242, and 253–275; these read HMCPECKRCFKKRTHLVEHLHLH, HHCPLCHYSAVERNALNRHMASMH, and YACPVCREEFRLSQALKEHLKSH. A C2H2-type 4; atypical zinc finger spans residues 286-311; it reads LRCFQEGCSYAAPDRKAFIKHLKETH. 10 consecutive C2H2-type zinc fingers follow at residues 316–340, 343–366, 372–395, 401–423, 429–451, 457–479, 485–507, 512–536, 544–567, and 573–596; these read VECRHHSCPMLFATAEAMEAHHKSH, FHCPHCDFACSNKHLFRKHKKQGH, LRCTFCPFATFNPVAYQDHVGKMH, HQCPECNFATAHKRVLIRHMLLH, HKCELCDFTCRDVSYLSKHMLTH, YMCTECGYVTKWKHYLRVHMRKH, YQCNQCSYRCHRADQLSSHKLRH, LMCEVCAFACKRKYELQKHMASQHH, YPCHYCSYQSRHKQAVLSHENCKH, and FHCALCDYRTFSNTTLLFHKRKAH. A Glycyl lysine isopeptide (Lys-Gly) (interchain with G-Cter in SUMO2) cross-link involves residue K594. Disordered regions lie at residues 613–690, 704–798, 897–935, 947–1014, and 1052–1092; these read EPEG…EVEE, LESV…PPLP, KGLPRPDSPIPLQPVLPGTQASEDTESGKPPPASQEAEL, REPE…SPTE, and GRGG…GDGD. Low complexity predominate over residues 725 to 739; sequence PLGLEGPDGLEGPEL. Residues 1061–1075 show a composition bias toward polar residues; sequence TPQTQPDVSPLSNGD. The segment covering 1082–1092 has biased composition (low complexity); sequence GSTESSSGDGD. 15 C2H2-type zinc fingers span residues 1135–1158, 1171–1194, 1200–1222, 1228–1251, 1257–1280, 1286–1309, 1328–1351, 1354–1377, 1380–1403, 1424–1446, 1452–1474, 1480–1502, 1508–1530, 1536–1559, and 1565–1587; these read LHCSLCPFTAPAATALRLHQKRRH, LQCGDCGFTCKQSRCMQQHRRLKH, HQCPFCDFSTTRRYRLEAHQSRH, IPCSSCPQTFGTNSKLRLHRLRVH, HFCPLCDYSGYLRHDITRHVNSCH, FACSQCEAQFSSETALKQHALRRH, LHCSRCGLLCPSPASLRGHTRKQH, LECGACQEAFPSRLALDEHRRQQH, HRCQLCDFAARERVGLVKHYLEQH, LHCPFCDFTCRHQLVLDHHVKGH, YKCTDCAYSTKNRQKITWHSRIH, YHCHLCPYACADPSRLKYHMRIH, YLCPECGYKCKWVNQLKYHMTKH, YQCPECEYCTNRADALRVHQETRH, and FMCEQCGKAFKTRFLLRTHLRKH. A Glycyl lysine isopeptide (Lys-Gly) (interchain with G-Cter in SUMO2) cross-link involves residue K1193. A Glycyl lysine isopeptide (Lys-Gly) (interchain with G-Cter in SUMO2) cross-link involves residue K1242. A Glycyl lysine isopeptide (Lys-Gly) (interchain with G-Cter in SUMO2) cross-link involves residue K1591. C2H2-type zinc fingers lie at residues 1593 to 1615 and 1621 to 1643; these read YVCNVCHRAFRWAAGLRHHALTH and FFCRLCNYKAKQKFQVVKHVRRH. Residues 1638 to 1687 are disordered; that stretch reads KHVRRHHPDQADPNQGVGKDPTTPTVHLHDVQLEDPSPPAPAAPHTGPEG.

It belongs to the krueppel C2H2-type zinc-finger protein family.

It is found in the nucleus. Functionally, may be involved in transcriptional regulation. The chain is Zinc finger protein 142 from Homo sapiens (Human).